Here is a 313-residue protein sequence, read N- to C-terminus: Porphobilinogen deaminase (313 aa).

The residue at position 242 (Cys242) is an S-(dipyrrolylmethanemethyl)cysteine.

Belongs to the HMBS family. As to quaternary structure, monomer. It depends on dipyrromethane as a cofactor.

The enzyme catalyses 4 porphobilinogen + H2O = hydroxymethylbilane + 4 NH4(+). Its pathway is porphyrin-containing compound metabolism; protoporphyrin-IX biosynthesis; coproporphyrinogen-III from 5-aminolevulinate: step 2/4. Its function is as follows. Tetrapolymerization of the monopyrrole PBG into the hydroxymethylbilane pre-uroporphyrinogen in several discrete steps. This chain is Porphobilinogen deaminase, found in Yersinia pestis bv. Antiqua (strain Angola).